The primary structure comprises 604 residues: Glucose oxidase (604 aa).

An N-terminal signal peptide occupies residues 1-18 (MKSTIITSILFSVATVQA). Residues Leu-52, Thr-53, and Glu-73 each contribute to the FAD site. Asn-111 is a glycosylation site (N-linked (GlcNAc...) asparagine). FAD is bound by residues Ser-125, Asn-129, Gly-130, and Ser-132. Cys-186 and Cys-228 are joined by a disulfide. N-linked (GlcNAc...) asparagine glycosylation is present at Asn-213. Residue Val-272 participates in FAD binding. Residues Asn-278, Asn-409, and Asn-531 are each glycosylated (N-linked (GlcNAc...) asparagine). The Proton acceptor role is filled by His-537. Residues Lys-558 and Val-559 each coordinate O2. FAD-binding residues include Gly-570 and Met-582.

Belongs to the GMC oxidoreductase family. As to quaternary structure, homodimer. FAD serves as cofactor.

It localises to the secreted. It is found in the cell wall. Its subcellular location is the cytoplasm. The protein resides in the extracellular space. The protein localises to the extracellular matrix. The catalysed reaction is beta-D-glucose + O2 = D-glucono-1,5-lactone + H2O2. Glucose oxidase catalyzes the oxidation of beta-D-glucose to D-glucono-delta-lactone and hydrogen peroxide in the presence of molecular oxygen. The enzyme also catalyzes the reaction with D-xylose but at a much lower rate. Shows any activities against D-fructose, D-galactose and D-arabinose. The enzyme is cytotoxic for a series of bacteria, yeasts and filamentous fungi and acts primarily via the liberation of H(2)O(2), which is a harmful oxidative stress-generating agent. In Penicillium chrysogenum (Penicillium notatum), this protein is Glucose oxidase.